The chain runs to 299 residues: MLEVNLFGIKFKNPLILASGVVDMTPELLRRAHREGAGGVVTKSIGMEPRKGYENPTIVELPYGLINAMGLPNPGWEAFLEEFRKEKFDFPVIVSIFGGTPEEFAFLAEKLGEVADAFELNLSCPHAKGYGMEIGQKPENVYEVVKAVKDVTDKPVIAKLTPNVSDIRELGLAAEKAGADGVSAINTVKAIAIDIYAKRPILSNKFGGYSGPGVKPIALRAVYDLASSLDIPVIGIGGITTWQDAVEFLLAGASALQIGTAVYLRGFSVFREIAEGISRYLKEEGYSSVKEIIGLALKV.

FMN-binding positions include S19 and 43 to 44 (KS). Substrate-binding positions include K43, 67 to 71 (NAMGL), and N121. N121 is a binding site for FMN. The active-site Nucleophile is C124. FMN contacts are provided by K159 and I185. Residue 186 to 187 (NT) coordinates substrate. FMN is bound by residues G211, 237–238 (GG), and 259–260 (GT).

The protein belongs to the dihydroorotate dehydrogenase family. Type 1 subfamily. As to quaternary structure, heterotetramer of 2 PyrK and 2 PyrD type B subunits. It depends on FMN as a cofactor.

The protein localises to the cytoplasm. It carries out the reaction (S)-dihydroorotate + NAD(+) = orotate + NADH + H(+). Its pathway is pyrimidine metabolism; UMP biosynthesis via de novo pathway; orotate from (S)-dihydroorotate (NAD(+) route): step 1/1. Its function is as follows. Catalyzes the conversion of dihydroorotate to orotate with NAD(+) as electron acceptor. The protein is Dihydroorotate dehydrogenase B (NAD(+)), catalytic subunit (pyrD) of Pyrococcus abyssi (strain GE5 / Orsay).